The primary structure comprises 104 residues: Large ribosomal subunit protein uL24 (104 aa).

This sequence belongs to the universal ribosomal protein uL24 family. As to quaternary structure, part of the 50S ribosomal subunit.

Its function is as follows. One of two assembly initiator proteins, it binds directly to the 5'-end of the 23S rRNA, where it nucleates assembly of the 50S subunit. One of the proteins that surrounds the polypeptide exit tunnel on the outside of the subunit. The polypeptide is Large ribosomal subunit protein uL24 (Treponema denticola (strain ATCC 35405 / DSM 14222 / CIP 103919 / JCM 8153 / KCTC 15104)).